Consider the following 1788-residue polypeptide: MDAHYAPAGFAEPPAPPASAATQPAAPAWAYEARVPAAASSPSCSGSSPSLKASYEDGHPSQSESDVLQRQTFTASHQLPGYATTPQATGMHSSAATELFVAGPLPTTGTLPPPTLSAYQHSSTFSNRNFATTSPLVLQDSSFNTTSNGILSPHDPLLQIKTSQGTVPTALAFERLGSSALSNSVPPQSSTYRSAQESAPHLLQPQFSLLPSTLGGAQQTPQAYNSALFPSSAASIERALLRECSVIKHHQRPSVTQSIQAQLTGSQHPLHSYLSSASIGNFQEPSRQSSLSCSSVRDSTQVSNGVLPQKTPQVSAELAQSYSSVIPSSGYLPSATKVDSCSTKQPLTSTTIPKPQSVIPPVQTLNYSKPLHNQSSVISGQAQIYSTAQLPSLLSVSQSQNYGLVQPHNVPSIVHSQVYRSSRVEKLPSLYKTLTFSGSSQPVTSENQTLSYSSNQQEVLSLVTNENYPAQTRDLPSVSESQNYSSGQSQGLSPVSQTQVSYSSQSQVLSVVSPSESYASGQSLTLTAPSLSYSSASRGQSLPVSTPTPSYTSMHPSPNAQTQGSSAQPQEFLPAVQSSFASSTRGQTLQSSIPSPDPKSYAERKLDSSVYTSSKQDEFPVQKLQALQSQASLESSSQRLPDGEVNAQESVYKTSKADDRYSQSVTRNNSHLEDQVVGVALQGSEQEENMVGSMTQLNQQSGQSNNAVATDLKKATNLMQTPQVRLNTKDLNQQHSLMHKMHEAKVQQQHDQIMSASSQIQIPNPALGQSHQALPHTSVLLDSACDLQILQQAGILQASLGQAKASLQVQRVQSPQQIVHPFLQMDGHIIQSNGEHPQQQLHPHNSDIMKLDLPEPSKPLQQLTTKGPFSEANPHDSKNQFVSLGSICFSEAMLLSDERNILSNVDDILAATAAACGVTPSDFSKSAANETMQDIESSDSKSHYQQSLNVRHVNSDFNSIAASVGKPQSINDISLNGNQVSVSLSSVPTLQSETVLDQPHMETPSQTIPTKVPSAMVGLGQEIQEQSSDPFKKQLTINHESKEDREIAVDSALSNNRNQEFVSNSRSISGDSVVSERDFTLVGDDTGVLVNPRRSTLALLAMPQPGDAASGKTEDEKQDVTYFNLPKEKAKGKEQGKEEEDNQKQLKRSAQCKRQNPRGTDVYVPYTSPSLESCDEGFQHQEKMRQKIKEVEEKQPEVKTGFIASFLDFLKCGPKQQFSTLAVRVPNRTRRSGIQTTRTFCPPPFAKTSPAAQAPSETGGVSLSEKVDSELKTLEQLSSFSSDEEDPGSCGHDIYKNTSAPLTVLDATSDKTKKTVLEALPVATPGASAETAGVAPTASTAVATIKQDLHLTSLTVNTMENANSTESPTAIELDSLPSDQLAKGQDTVAIEGFTDEENIESGGEGQYRERDEFVVKIEDIETFKEALNTGKEPPAIWKVQKALLQKFVPEIRDGQREFAATNSYLGYFGDAKTKYKRIYVKFIENANKKEYVRVCSKKPRNKPSQTIRNIPSKPSSISKTSDPPVSKTTTTKTPSTKPKAKQLKIKAEPPPKKRKKWKEEFSSSQSESSPEVRSSSSEDEGFEPPAPSVTRFLNTRAMKETFKSYMELLVSIALDPDTMQALEKSNDELLLPHMKKIDGMLNDNRKRLLVNLHLDQPFKNALESFPELTVITRDSKAKSGGSAISKIKMNGKAYNKKTLRTSKTTTKSAQEFAVDPEKIQLYSLYHSLHHYKYHVYLICKNEISSVQKKNEDLGQEEIVQLCMKNVKWVEDLFEKFGELLNHVQQKCS.

Over residues 1-53 (MDAHYAPAGFAEPPAPPASAATQPAAPAWAYEARVPAAASSPSCSGSSPSLKA) the composition is skewed to low complexity. Disordered regions lie at residues 1–69 (MDAH…DVLQ), 472–498 (TRDLPSVSESQNYSSGQSQGLSPVSQT), and 532–617 (SYSS…SKQD). Polar residues-rich tracts occupy residues 60 to 69 (PSQSESDVLQ), 478 to 492 (VSESQNYSSGQSQGL), 532 to 569 (SYSSASRGQSLPVSTPTPSYTSMHPSPNAQTQGSSAQP), and 576 to 594 (VQSSFASSTRGQTLQSSIP). Residues Ser-670 and Ser-940 each carry the phosphoserine modification. Thr-1003 is modified (phosphothreonine). Ser-1041 bears the Phosphoserine mark. Disordered stretches follow at residues 1104–1163 (QPGD…TDVY) and 1234–1264 (IQTTRTFCPPPFAKTSPAAQAPSETGGVSLS). Lys-1112 participates in a covalent cross-link: Glycyl lysine isopeptide (Lys-Gly) (interchain with G-Cter in SUMO2). Basic and acidic residues predominate over residues 1126-1136 (PKEKAKGKEQG). A Glycyl lysine isopeptide (Lys-Gly) (interchain with G-Cter in SUMO2) cross-link involves residue Lys-1137. Phosphoserine is present on residues Ser-1262, Ser-1281, and Ser-1282. Phosphothreonine is present on Thr-1394. Ser-1401 carries the phosphoserine modification. Residues 1494–1588 (VCSKKPRNKP…DEGFEPPAPS (95 aa)) are disordered. Over residues 1510–1537 (IPSKPSSISKTSDPPVSKTTTTKTPSTK) the composition is skewed to low complexity. The segment covering 1545 to 1561 (IKAEPPPKKRKKWKEEF) has biased composition (basic and acidic residues). A compositionally biased stretch (low complexity) spans 1562–1575 (SSSQSESSPEVRSS).

In terms of assembly, interacts with TET1.

Its subcellular location is the chromosome. Plays an essential role in the protection and maintenance of transcriptional and developmental programs. Protects many bivalent promoters and poised enhancers from hypermethylation, showing a marked preference for these regulatory elements over other types of promoters or enhancers. Mechanistically, cooperates with TET1 and binds to DNA in a common complex to inhibit the binding of DNMT3A/3B and therefore de novo methylation. The sequence is that of Glutamine and serine-rich protein 1 from Mus musculus (Mouse).